The chain runs to 281 residues: Urease accessory protein UreD (281 aa).

Residues 1–25 form a disordered region; the sequence is MLNTLEPQPCETDALSPRLQRSTGS.

This sequence belongs to the UreD family. As to quaternary structure, ureD, UreF and UreG form a complex that acts as a GTP-hydrolysis-dependent molecular chaperone, activating the urease apoprotein by helping to assemble the nickel containing metallocenter of UreC. The UreE protein probably delivers the nickel.

Its subcellular location is the cytoplasm. Its function is as follows. Required for maturation of urease via the functional incorporation of the urease nickel metallocenter. The protein is Urease accessory protein UreD of Dinoroseobacter shibae (strain DSM 16493 / NCIMB 14021 / DFL 12).